We begin with the raw amino-acid sequence, 166 residues long: Large ribosomal subunit protein uL11 (166 aa).

The protein belongs to the universal ribosomal protein uL11 family. In terms of assembly, part of the ribosomal stalk of the 50S ribosomal subunit. Interacts with L10 and the large rRNA to form the base of the stalk. L10 forms an elongated spine to which L12 dimers bind in a sequential fashion forming a multimeric L10(L12)X complex.

Forms part of the ribosomal stalk which helps the ribosome interact with GTP-bound translation factors. This Methanopyrus kandleri (strain AV19 / DSM 6324 / JCM 9639 / NBRC 100938) protein is Large ribosomal subunit protein uL11.